The sequence spans 306 residues: Embryogenic cell protein 40 (306 aa).

Disordered regions lie at residues 1 to 57, 80 to 171, and 188 to 306; these read MADL…ASHG, AATH…GGLG, and GTGI…PTSH. A compositionally biased stretch (polar residues) spans 12–23; it reads IQLTDQHGNPVQ. The segment covering 32–44 has biased composition (low complexity); that stretch reads VHITGVATTGATT. 3 stretches are compositionally biased toward gly residues: residues 85 to 119, 127 to 151, and 159 to 171; these read GSHGGTGTHGVGPTGVGAAHGGTGTTTGLGTGTGT, GPTGIGGTHGVGSTGIGGAHGGTGV, and GPTGTGAAHGGLG. Residues 194-204 show a composition bias toward low complexity; it reads GSAPASAGSHS. Composition is skewed to basic and acidic residues over residues 205 to 218 and 243 to 259; these read HAPEKKTALGEQLH and KIKEKLGGGKHKKDEHT. The segment covering 260–278 has biased composition (low complexity); sequence TVATTKTTTAAHPGGAAVA. A compositionally biased stretch (basic and acidic residues) spans 279–298; the sequence is VEHHEHEKKSMLDKIKDKLP.

Belongs to the plant dehydrin family.

The sequence is that of Embryogenic cell protein 40 (ECP40) from Daucus carota (Wild carrot).